The primary structure comprises 425 residues: Riboflavin biosynthesis protein RibBA (425 aa).

The interval 1–204 is DHBP synthase; it reads MTRLDSVERA…IADLIEWRRK (204 aa). D-ribulose 5-phosphate contacts are provided by residues 28–29, D33, 141–145, and E165; these read RE and RPGHT. A Mg(2+)-binding site is contributed by E29. Residue H144 participates in Mg(2+) binding. The interval 205-425 is GTP cyclohydrolase II; that stretch reads HEKHIERIAE…HLPGEFGGAL (221 aa). Residue 259–263 coordinates GTP; it reads RVHSE. Zn(2+) is bound by residues C264, C275, and C277. GTP is bound by residues Q280, 303-305, and T325; that span reads EGR. The Proton acceptor; for GTP cyclohydrolase activity role is filled by D337. R339 serves as the catalytic Nucleophile; for GTP cyclohydrolase activity. The GTP site is built by T360 and K365.

This sequence in the N-terminal section; belongs to the DHBP synthase family. The protein in the C-terminal section; belongs to the GTP cyclohydrolase II family. It depends on Mg(2+) as a cofactor. The cofactor is Mn(2+). Requires Zn(2+) as cofactor.

It carries out the reaction D-ribulose 5-phosphate = (2S)-2-hydroxy-3-oxobutyl phosphate + formate + H(+). It catalyses the reaction GTP + 4 H2O = 2,5-diamino-6-hydroxy-4-(5-phosphoribosylamino)-pyrimidine + formate + 2 phosphate + 3 H(+). Its pathway is cofactor biosynthesis; riboflavin biosynthesis; 2-hydroxy-3-oxobutyl phosphate from D-ribulose 5-phosphate: step 1/1. It participates in cofactor biosynthesis; riboflavin biosynthesis; 5-amino-6-(D-ribitylamino)uracil from GTP: step 1/4. Its function is as follows. Catalyzes the conversion of D-ribulose 5-phosphate to formate and 3,4-dihydroxy-2-butanone 4-phosphate. Catalyzes the conversion of GTP to 2,5-diamino-6-ribosylamino-4(3H)-pyrimidinone 5'-phosphate (DARP), formate and pyrophosphate. This Mycolicibacterium paratuberculosis (strain ATCC BAA-968 / K-10) (Mycobacterium paratuberculosis) protein is Riboflavin biosynthesis protein RibBA.